The primary structure comprises 235 residues: Large ribosomal subunit protein uL1 (235 aa).

The protein belongs to the universal ribosomal protein uL1 family. Part of the 50S ribosomal subunit.

Functionally, binds directly to 23S rRNA. The L1 stalk is quite mobile in the ribosome, and is involved in E site tRNA release. In terms of biological role, protein L1 is also a translational repressor protein, it controls the translation of the L11 operon by binding to its mRNA. This Desulfovibrio desulfuricans (strain ATCC 27774 / DSM 6949 / MB) protein is Large ribosomal subunit protein uL1.